Here is a 341-residue protein sequence, read N- to C-terminus: Thromboxane A2 receptor (341 aa).

Residues 1 to 29 (MWLNSTSLGACFRPVNITLQERRAIASPW) are Extracellular-facing. N-linked (GlcNAc...) asparagine glycosylation is found at Asn4 and Asn16. Residues 30–52 (FAASFCALGLGSNLLALSVLAGA) form a helical membrane-spanning segment. Topologically, residues 53-65 (RPGAGPRSSFLAL) are cytoplasmic. The chain crosses the membrane as a helical span at residues 66–86 (LCGLVLTDFLGLLVTGAVVAS). Residues 87-105 (QHAALLDWRATDPGCRLCH) are Extracellular-facing. Cys104 and Cys181 are joined by a disulfide. The chain crosses the membrane as a helical span at residues 106–127 (FMGAAMVFFGLCPLLLGAAMAA). Topologically, residues 128 to 147 (ERFVGITRPFSRPAATSRRA) are cytoplasmic. A helical transmembrane segment spans residues 148 to 170 (WATVGLVWVGAGTLGLLPLLGLG). Over 171–191 (RYSVQYPGSWCFLTLGAERGD) the chain is Extracellular. A helical membrane pass occupies residues 192 to 217 (VAFGLMFALLGSVSVGLSLLLNTVSV). Over 218–244 (ATLCRVYHAREATQRPRDCEVEMMVQL) the chain is Cytoplasmic. Residues 245–268 (VGIMVVATVCWMPLLVFILQTLLQ) traverse the membrane as a helical segment. The Extracellular portion of the chain corresponds to 269–287 (TLPVMSPSGQLLRTTERQL). The helical transmembrane segment at 288–309 (LIYLRVATWNQILDPWVYILFR) threads the bilayer. The Cytoplasmic portion of the chain corresponds to 310–341 (RSVLRRLHPRFTSQLQAVSLHSPPTQAMLSGP). Ser328 is modified (phosphoserine).

It belongs to the G-protein coupled receptor 1 family. As to quaternary structure, interacts with RPGRIP1L. Interacts with RACK1; the interaction regulates TBXA2R cell surface expression. In terms of tissue distribution, in the brain, expressed in all types of glial cells. In the kidney, expressed in the mesangial cells of the glomerulus, smooth muscle cells of the renal arterioles, and in transitional cell epithelium of renal pelvis.

It localises to the cell membrane. Receptor for thromboxane A2 (TXA2), a potent stimulator of platelet aggregation. The activity of this receptor is mediated by a G-protein that activates a phosphatidylinositol-calcium second messenger system. In the kidney, the binding of TXA2 to glomerular TP receptors causes intense vasoconstriction. Activates phospholipase C and adenylyl cyclase. This chain is Thromboxane A2 receptor (Tbxa2r), found in Rattus norvegicus (Rat).